Here is a 308-residue protein sequence, read N- to C-terminus: Inactive C-alpha-formylglycine-generating enzyme 2 (308 aa).

Positions 1–33 (MRSEFWFPSMGSLLPPVLLLWLLSCPRLQLGHA) are cleaved as a signal peptide. A disulfide bridge links Cys163 with Cys297. A glycan (N-linked (GlcNAc...) asparagine) is linked at Asn198. Residues Asn201, Leu202, Asp215, Phe217, Asp236, Gly239, Val241, and Glu243 each coordinate Ca(2+). The segment covering 281–291 (RMGNTPDSASD) has biased composition (polar residues). The disordered stretch occupies residues 281 to 308 (RMGNTPDSASDNLGFRCASSAGRPKEDL). A Non-canonical ER retention motif motif is present at residues 305-308 (KEDL).

The protein belongs to the sulfatase-modifying factor family. In terms of assembly, homodimer and heterodimer with SUMF1.

It is found in the endoplasmic reticulum lumen. Lacks formylglycine generating activity and is unable to convert newly synthesized inactive sulfatases to their active form. Inhibits the activation of sulfatases by SUMF1. This chain is Inactive C-alpha-formylglycine-generating enzyme 2, found in Mus musculus (Mouse).